The following is a 438-amino-acid chain: Dolichyl-diphosphooligosaccharide--protein glycosyltransferase 48 kDa subunit (438 aa).

A signal peptide spans 1 to 25; sequence MASLRLSVLLVSVSWLLLLVSGLRA. Over 26–408 the chain is Lumenal; it reads GPRTLVLMEN…QYERFIPSAY (383 aa). Residues 409–429 form a helical membrane-spanning segment; sequence PYYASAFSVMFGLFIFSIVFL. Residues 430–438 lie on the Cytoplasmic side of the membrane; sequence HMKEKEKSD.

Belongs to the DDOST 48 kDa subunit family. In terms of assembly, component of the oligosaccharyltransferase (OST) complex.

The protein localises to the endoplasmic reticulum membrane. It functions in the pathway protein modification; protein glycosylation. In terms of biological role, subunit of the oligosaccharyl transferase (OST) complex that catalyzes the initial transfer of a defined glycan (Glc(3)Man(9)GlcNAc(2) in eukaryotes) from the lipid carrier dolichol-pyrophosphate to an asparagine residue within an Asn-X-Ser/Thr consensus motif in nascent polypeptide chains, the first step in protein N-glycosylation. N-glycosylation occurs cotranslationally and the complex associates with the Sec61 complex at the channel-forming translocon complex that mediates protein translocation across the endoplasmic reticulum (ER). All subunits are required for a maximal enzyme activity. Required for the assembly of both SST3A- and SS3B-containing OST complexes. The sequence is that of Dolichyl-diphosphooligosaccharide--protein glycosyltransferase 48 kDa subunit from Xenopus laevis (African clawed frog).